Here is a 200-residue protein sequence, read N- to C-terminus: 3-isopropylmalate dehydratase small subunit (200 aa).

It belongs to the LeuD family. LeuD type 1 subfamily. As to quaternary structure, heterodimer of LeuC and LeuD.

The enzyme catalyses (2R,3S)-3-isopropylmalate = (2S)-2-isopropylmalate. The protein operates within amino-acid biosynthesis; L-leucine biosynthesis; L-leucine from 3-methyl-2-oxobutanoate: step 2/4. In terms of biological role, catalyzes the isomerization between 2-isopropylmalate and 3-isopropylmalate, via the formation of 2-isopropylmaleate. This chain is 3-isopropylmalate dehydratase small subunit, found in Haemophilus influenzae (strain 86-028NP).